Consider the following 318-residue polypeptide: UDP-3-O-acylglucosamine N-acyltransferase (318 aa).

Histidine 231 functions as the Proton acceptor in the catalytic mechanism.

Belongs to the transferase hexapeptide repeat family. LpxD subfamily. Homotrimer.

The catalysed reaction is a UDP-3-O-[(3R)-3-hydroxyacyl]-alpha-D-glucosamine + a (3R)-hydroxyacyl-[ACP] = a UDP-2-N,3-O-bis[(3R)-3-hydroxyacyl]-alpha-D-glucosamine + holo-[ACP] + H(+). It functions in the pathway bacterial outer membrane biogenesis; LPS lipid A biosynthesis. Functionally, catalyzes the N-acylation of UDP-3-O-acylglucosamine using 3-hydroxyacyl-ACP as the acyl donor. Is involved in the biosynthesis of lipid A, a phosphorylated glycolipid that anchors the lipopolysaccharide to the outer membrane of the cell. The chain is UDP-3-O-acylglucosamine N-acyltransferase from Campylobacter jejuni subsp. doylei (strain ATCC BAA-1458 / RM4099 / 269.97).